Consider the following 206-residue polypeptide: Large ribosomal subunit protein uL3 (206 aa).

The tract at residues 126–155 (HGHAGGPGAHGSRFHRHPGSMGANSTPSRV) is disordered.

This sequence belongs to the universal ribosomal protein uL3 family. As to quaternary structure, part of the 50S ribosomal subunit. Forms a cluster with proteins L14 and L19.

One of the primary rRNA binding proteins, it binds directly near the 3'-end of the 23S rRNA, where it nucleates assembly of the 50S subunit. This is Large ribosomal subunit protein uL3 from Leptospira interrogans serogroup Icterohaemorrhagiae serovar copenhageni (strain Fiocruz L1-130).